The following is a 555-amino-acid chain: Protein NRT1/ PTR FAMILY 5.12 (555 aa).

2 helical membrane passes run 53–73 (FAYF…LGES) and 83–103 (LWLG…DSFL). Position 108 is a phosphothreonine (threonine 108). The next 10 helical transmembrane spans lie at 109–129 (ILLT…SATI), 148–168 (VIIF…FKVC), 190–210 (SYFN…RLVT), 221–241 (LGYA…LLGI), 315–335 (AVLS…VFAQ), 357–377 (VPAA…IPIY), 401–421 (ISTG…VEMK), 443–463 (VCWL…TMVG), 482–502 (ALYL…VSVI), and 526–546 (YFYW…VYFA).

It belongs to the major facilitator superfamily. Proton-dependent oligopeptide transporter (POT/PTR) (TC 2.A.17) family. Expressed in shoots and roots.

Its subcellular location is the membrane. This Arabidopsis thaliana (Mouse-ear cress) protein is Protein NRT1/ PTR FAMILY 5.12 (NPF5.12).